The following is a 487-amino-acid chain: UDP-N-acetylmuramate--L-alanine ligase (487 aa).

ATP is bound at residue 126-132 (GTHGKTT).

This sequence belongs to the MurCDEF family.

The protein resides in the cytoplasm. It catalyses the reaction UDP-N-acetyl-alpha-D-muramate + L-alanine + ATP = UDP-N-acetyl-alpha-D-muramoyl-L-alanine + ADP + phosphate + H(+). It functions in the pathway cell wall biogenesis; peptidoglycan biosynthesis. Cell wall formation. This Psychromonas ingrahamii (strain DSM 17664 / CCUG 51855 / 37) protein is UDP-N-acetylmuramate--L-alanine ligase.